A 238-amino-acid polypeptide reads, in one-letter code: Tabinhibitin 5 (238 aa).

Residues 1–23 form the signal peptide; sequence MTSILVSRFLLAALVLQYATIDA. Residues 32–34 carry the Cell attachment site motif; the sequence is RGD. The SCP domain occupies 67-211; it reads LSKINDVRDH…KARALLTCNF (145 aa).

The protein belongs to the CRISP family. Expressed in salivary glands.

The protein localises to the secreted. In terms of biological role, inhibits platelet aggregation induced by all agonists tested (ADP, arachidonic acid, the thromboxane A2 analog U46619, thrombin, and snake venom snaclecs (TMVA that activates platelet through GPIB, and stejnulxin that specifically acts through GPVI (GP6))). May act by competing with fibrinogen for binding to glycoprotein IIb/IIIa (ITGA2B/ITGB3). This is Tabinhibitin 5 from Tabanus yao (Horsefly).